Reading from the N-terminus, the 446-residue chain is Sensor protein PfeS (446 aa).

Residues 1–9 (MRRHPLLWK) lie on the Cytoplasmic side of the membrane. Residues 10-30 (LALLQVGFCLLLTWLIYTWGL) traverse the membrane as a helical segment. Topologically, residues 31–155 (SVERSTYFLA…LLPGGLTPWT (125 aa)) are periplasmic. Residues 156–176 (HLVTHGIVPTLLAALLGLLLY) traverse the membrane as a helical segment. In terms of domain architecture, HAMP spans 177 to 233 (RHLVVPLNRLRDRADALRADELESTPLAAPLAARRDELGELAQALEHMAERLRLSLA). Residues 177 to 446 (RHLVVPLNRL…CLHLWLPAAA (270 aa)) are Cytoplasmic-facing. One can recognise a Histidine kinase domain in the interval 241 to 446 (TLSHELRTPL…CLHLWLPAAA (206 aa)). A Phosphohistidine; by autocatalysis modification is found at His244.

The protein resides in the cell inner membrane. It carries out the reaction ATP + protein L-histidine = ADP + protein N-phospho-L-histidine.. Member of the two-component regulatory system PfeR/PfeS. May activate PfeR by phosphorylation. This chain is Sensor protein PfeS (pfeS), found in Pseudomonas aeruginosa (strain ATCC 15692 / DSM 22644 / CIP 104116 / JCM 14847 / LMG 12228 / 1C / PRS 101 / PAO1).